The chain runs to 340 residues: Guanine nucleotide-binding protein subunit beta-1 (340 aa).

The residue at position 29 (Ser29) is a Phosphoserine. 7 WD repeats span residues 53–92 (GHLA…KVHA), 95–134 (LRSS…GNVR), 141–179 (GHGG…QVTS), 182–221 (GHTG…CKQT), 224–263 (GHES…ELAM), 268–307 (NIIC…RSGI), and 310–340 (GHDN…RVWN).

Belongs to the WD repeat G protein beta family. As to quaternary structure, g proteins are composed of 3 units, alpha, beta and gamma. In terms of tissue distribution, expressed in the brain neuropil and cortex, and the thoracic ganglion (at protein level). Expression detected in eye at protein level but not at mRNA level, suggesting cross reactivity of antibodies to the similar Gbeta76C protein.

Its function is as follows. Guanine nucleotide-binding proteins (G proteins) are involved as a modulator or transducer in various transmembrane signaling systems. The beta and gamma chains are required for the GTPase activity, for replacement of GDP by GTP, and for G protein-effector interaction. The protein is Guanine nucleotide-binding protein subunit beta-1 (Gbeta13F) of Drosophila melanogaster (Fruit fly).